The primary structure comprises 486 residues: Carboxypeptidase Y homolog ARB_07161 (486 aa).

Positions 1–17 (MKGLLSLLLVGAANALA) are cleaved as a signal peptide. N-linked (GlcNAc...) asparagine glycosylation occurs at Asn-111. Residue Ser-241 is part of the active site. 3 cysteine pairs are disulfide-bonded: Cys-281/Cys-305, Cys-288/Cys-298, and Cys-327/Cys-334. Asp-403 is an active-site residue. Cys-406 lines the substrate pocket. An N-linked (GlcNAc...) asparagine glycan is attached at Asn-430. Residue His-462 is part of the active site.

It belongs to the peptidase S10 family.

The protein resides in the secreted. It catalyses the reaction Release of a C-terminal amino acid with broad specificity.. Involved in degradation of small peptides. The protein is Carboxypeptidase Y homolog ARB_07161 of Arthroderma benhamiae (strain ATCC MYA-4681 / CBS 112371) (Trichophyton mentagrophytes).